The primary structure comprises 274 residues: Cytochrome b-c1 complex subunit Rieske, mitochondrial (274 aa).

The Mitochondrial matrix portion of the chain corresponds to 79–103; sequence SHTDIKVPDFSEYRRLEVLDSTKSS. A helical membrane pass occupies residues 104–140; sequence RESSEARKGFSYLVTGVTTVGVAYAAKNAVTQFVSSM. Residues 141–274 lie on the Mitochondrial intermembrane side of the membrane; sequence SASADVLALA…FTSDDMVIVG (134 aa). A Rieske domain is found at 187–272; that stretch reads EAAVELSQLR…YEFTSDDMVI (86 aa). Residues Cys-217, His-219, Cys-236, His-239, and Ser-241 each contribute to the [2Fe-2S] cluster site. Residues Cys-222 and Cys-238 are joined by a disulfide bond.

This sequence belongs to the Rieske iron-sulfur protein family. As to quaternary structure, component of the ubiquinol-cytochrome c oxidoreductase (cytochrome b-c1 complex, complex III, CIII), a multisubunit enzyme composed of 11 subunits. The complex is composed of 3 respiratory subunits cytochrome b, cytochrome c1 and Rieske protein UQCRFS1, 2 core protein subunits UQCRC1/QCR1 and UQCRC2/QCR2, and 6 low-molecular weight protein subunits UQCRH/QCR6, UQCRB/QCR7, UQCRQ/QCR8, UQCR10/QCR9, UQCR11/QCR10 and subunit 9, the cleavage product of Rieske protein UQCRFS1. The complex exists as an obligatory dimer and forms supercomplexes (SCs) in the inner mitochondrial membrane with NADH-ubiquinone oxidoreductase (complex I, CI) and cytochrome c oxidase (complex IV, CIV), resulting in different assemblies (supercomplex SCI(1)III(2)IV(1) and megacomplex MCI(2)III(2)IV(2)). Incorporation of the Rieske protein UQCRFS1 is the penultimate step in complex III assembly. Interacts with TTC19, which is involved in the clearance of UQCRFS1 fragments. In terms of assembly, component of the ubiquinol-cytochrome c oxidoreductase (cytochrome b-c1 complex, complex III, CIII). Subunit 9 corresponds to the mitochondrial targeting sequence (MTS) of Rieske protein UQCRFS1. It is retained after processing and incorporated inside complex III, where it remains bound to the complex and localizes between the 2 core subunits UQCRC1/QCR1 and UQCRC2/QCR2. Requires [2Fe-2S] cluster as cofactor. In terms of processing, proteolytic processing is necessary for the correct insertion of UQCRFS1 in the complex III dimer. Several fragments are generated during UQCRFS1 insertion, most probably due to the endogenous matrix-processing peptidase (MPP) activity of the 2 core protein subunits UQCRC1/QCR1 and UQCRC2/QCR2, which are homologous to the 2 mitochondrial-processing peptidase (MPP) subunits beta-MPP and alpha-MPP respectively. The action of the protease is also necessary for the clearance of the UQCRFS1 fragments.

The protein resides in the mitochondrion inner membrane. The enzyme catalyses a quinol + 2 Fe(III)-[cytochrome c](out) = a quinone + 2 Fe(II)-[cytochrome c](out) + 2 H(+)(out). Component of the ubiquinol-cytochrome c oxidoreductase, a multisubunit transmembrane complex that is part of the mitochondrial electron transport chain which drives oxidative phosphorylation. The respiratory chain contains 3 multisubunit complexes succinate dehydrogenase (complex II, CII), ubiquinol-cytochrome c oxidoreductase (cytochrome b-c1 complex, complex III, CIII) and cytochrome c oxidase (complex IV, CIV), that cooperate to transfer electrons derived from NADH and succinate to molecular oxygen, creating an electrochemical gradient over the inner membrane that drives transmembrane transport and the ATP synthase. The cytochrome b-c1 complex catalyzes electron transfer from ubiquinol to cytochrome c, linking this redox reaction to translocation of protons across the mitochondrial inner membrane, with protons being carried across the membrane as hydrogens on the quinol. In the process called Q cycle, 2 protons are consumed from the matrix, 4 protons are released into the intermembrane space and 2 electrons are passed to cytochrome c. The Rieske protein is a catalytic core subunit containing a [2Fe-2S] iron-sulfur cluster. It cycles between 2 conformational states during catalysis to transfer electrons from the quinol bound in the Q(0) site in cytochrome b to cytochrome c1. Incorporation of UQCRFS1 is the penultimate step in complex III assembly. Functionally, component of the ubiquinol-cytochrome c oxidoreductase (cytochrome b-c1 complex, complex III, CIII). UQCRFS1 undergoes proteolytic processing once it is incorporated in the complex III dimer. One of the fragments, called subunit 9, corresponds to its mitochondrial targeting sequence (MTS). The proteolytic processing is necessary for the correct insertion of UQCRFS1 in the complex III dimer, but the persistence of UQCRFS1-derived fragments may prevent newly imported UQCRFS1 to be processed and assembled into complex III and is detrimental for the complex III structure and function. This Gorilla gorilla gorilla (Western lowland gorilla) protein is Cytochrome b-c1 complex subunit Rieske, mitochondrial (UQCRFS1).